We begin with the raw amino-acid sequence, 62 residues long: Large ribosomal subunit protein bL28 (62 aa).

It belongs to the bacterial ribosomal protein bL28 family.

This is Large ribosomal subunit protein bL28 from Halalkalibacterium halodurans (strain ATCC BAA-125 / DSM 18197 / FERM 7344 / JCM 9153 / C-125) (Bacillus halodurans).